A 342-amino-acid polypeptide reads, in one-letter code: Aquaporin-8 (342 aa).

Helical transmembrane passes span 55–75 (FLAVFVLMVFIEGSAATAIFT), 98–118 (VAGGVSGAFLNPAVALAFAVL), and 126–146 (CIFYMISQYLAAFVASCTMFA). The NPA 1 motif lies at 108-110 (NPA). N-linked (GlcNAc...) asparagine glycosylation occurs at asparagine 166. 2 helical membrane-spanning segments follow: residues 184–204 (TAFADQVFCTAILLIVVLAMC) and 215–235 (FLPIAIGLLIITISCTLSYNA). An NPA 2 motif is present at residues 240 to 242 (NPS). The helical transmembrane segment at 266 to 286 (YTWFFVPVLGSHCGAIIGGAI) threads the bilayer. The span at 302–327 (TNSVSSMSYNEDNSTLTKRKQVSNIV) shows a compositional bias: polar residues. The disordered stretch occupies residues 302 to 342 (TNSVSSMSYNEDNSTLTKRKQVSNIVHDSKGAKGSSTAPVN). An N-linked (GlcNAc...) asparagine glycan is attached at asparagine 314.

This sequence belongs to the MIP/aquaporin (TC 1.A.8) family.

Its subcellular location is the cell membrane. Functionally, aquaglyceroporin that may modulate the water content and osmolytes during anhydrobiosis. The protein is Aquaporin-8 of Milnesium tardigradum (Water bear).